A 438-amino-acid polypeptide reads, in one-letter code: Transposon Ty2-B Gag polyprotein (438 aa).

3 stretches are compositionally biased toward polar residues: residues 1–11 (MESQQLHQNPH), 19–39 (ASVTSKEVSSNQDPLAVSASN), and 49–60 (KVNSQQETTPGT). Disordered regions lie at residues 1–88 (MESQ…YQQH), 364–397 (KNVSRTSPNTTNTKVTTRNYHRTNSSKPRAAKAH), and 419–438 (SSQYLSDDNELSLRPATERI). The RNA-binding stretch occupies residues 295 to 397 (ENNINVSDRL…SSKPRAAKAH (103 aa)). Residues 369–381 (TSPNTTNTKVTTR) are compositionally biased toward low complexity.

In terms of assembly, homotrimer.

It localises to the cytoplasm. In terms of biological role, capsid protein (CA) is the structural component of the virus-like particle (VLP), forming the shell that encapsulates the retrotransposons dimeric RNA genome. The particles are assembled from trimer-clustered units and there are holes in the capsid shells that allow for the diffusion of macromolecules. CA also has nucleocapsid-like chaperone activity, promoting primer tRNA(i)-Met annealing to the multipartite primer-binding site (PBS), dimerization of Ty2 RNA and initiation of reverse transcription. The polypeptide is Transposon Ty2-B Gag polyprotein (TY2A-B) (Saccharomyces cerevisiae (strain ATCC 204508 / S288c) (Baker's yeast)).